Here is a 435-residue protein sequence, read N- to C-terminus: Legumain (435 aa).

A signal peptide spans 1–17 (MTWRVAVLLSLVLGAGA). A glycan (N-linked (GlcNAc...) asparagine) is linked at Asn93. His150 is a catalytic residue. An N-linked (GlcNAc...) asparagine glycan is attached at Asn169. Cys191 functions as the Nucleophile in the catalytic mechanism. N-linked (GlcNAc...) asparagine glycosylation is found at Asn265 and Asn274. The propeptide occupies 326 to 435 (DVKESQNLIG…AMDKVCLSHY (110 aa)). 2 cysteine pairs are disulfide-bonded: Cys380–Cys414 and Cys392–Cys431.

Belongs to the peptidase C13 family. In terms of assembly, homodimer before autocatalytic removal of the propeptide. Monomer after autocatalytic processing. May interact with integrins. Glycosylated. Post-translationally, activated by autocatalytic processing at pH 4. As to expression, detected in kidney proximal tubules (at protein level). Ubiquitous. Particularly abundant in kidney and placenta.

The protein resides in the lysosome. The catalysed reaction is Hydrolysis of proteins and small molecule substrates at -Asn-|-Xaa- bonds.. With respect to regulation, inhibited by cystatin-C. In terms of biological role, has a strict specificity for hydrolysis of asparaginyl bonds. Can also cleave aspartyl bonds slowly, especially under acidic conditions. Involved in the processing of proteins for MHC class II antigen presentation in the lysosomal/endosomal system. Also involved in MHC class I antigen presentation in cross-presenting dendritic cells by mediating cleavage and maturation of Perforin-2 (MPEG1), thereby promoting antigen translocation in the cytosol. Required for normal lysosomal protein degradation in renal proximal tubules. Required for normal degradation of internalized EGFR. Plays a role in the regulation of cell proliferation via its role in EGFR degradation. The chain is Legumain (Lgmn) from Mus musculus (Mouse).